Consider the following 539-residue polypeptide: O-phosphoserine--tRNA(Cys) ligase (539 aa).

Residues 188–190 (HMT), 233–235 (SAS), 275–276 (YY), and Asn-327 each bind substrate.

This sequence belongs to the class-II aminoacyl-tRNA synthetase family. O-phosphoseryl-tRNA(Cys) synthetase subfamily. In terms of assembly, homotetramer. Interacts with SepCysS.

It catalyses the reaction tRNA(Cys) + O-phospho-L-serine + ATP = O-phospho-L-seryl-tRNA(Cys) + AMP + diphosphate. Catalyzes the attachment of O-phosphoserine (Sep) to tRNA(Cys). The protein is O-phosphoserine--tRNA(Cys) ligase of Methanosarcina barkeri (strain Fusaro / DSM 804).